The chain runs to 273 residues: 1,4-dihydroxy-2-naphthoyl-CoA synthase (273 aa).

Residues Arg34, 73–77 (SGGDQ), Tyr85, 117–121 (YAVGG), Thr143, Ser149, Tyr246, and Lys261 contribute to the substrate site. 142 to 144 (QTG) serves as a coordination point for hydrogencarbonate. Basic and acidic residues predominate over residues 254–265 (GRDAFKEKRDPD). Positions 254–273 (GRDAFKEKRDPDFDQFPKFP) are disordered.

The protein belongs to the enoyl-CoA hydratase/isomerase family. MenB subfamily. The cofactor is hydrogencarbonate.

It carries out the reaction 2-succinylbenzoyl-CoA + H(+) = 1,4-dihydroxy-2-naphthoyl-CoA + H2O. Its pathway is quinol/quinone metabolism; 1,4-dihydroxy-2-naphthoate biosynthesis; 1,4-dihydroxy-2-naphthoate from chorismate: step 6/7. It functions in the pathway quinol/quinone metabolism; menaquinone biosynthesis. In terms of biological role, converts o-succinylbenzoyl-CoA (OSB-CoA) to 1,4-dihydroxy-2-naphthoyl-CoA (DHNA-CoA). This is 1,4-dihydroxy-2-naphthoyl-CoA synthase from Staphylococcus aureus (strain MRSA252).